Reading from the N-terminus, the 737-residue chain is Polyribonucleotide nucleotidyltransferase (737 aa).

Residues Asp-514 and Asp-520 each coordinate Mg(2+). Residues 580–639 enclose the KH domain; it reads PRIITVKIPVDKIGEVIGPKGKMINQIQEDTGADITIEDDGTIYIGAQAGSQAEAARATI. The S1 motif domain maps to 651 to 723; that stretch reads GERYLGTVVK…SRGKLSLIPV (73 aa).

This sequence belongs to the polyribonucleotide nucleotidyltransferase family. Requires Mg(2+) as cofactor.

It localises to the cytoplasm. The enzyme catalyses RNA(n+1) + phosphate = RNA(n) + a ribonucleoside 5'-diphosphate. In terms of biological role, involved in mRNA degradation. Catalyzes the phosphorolysis of single-stranded polyribonucleotides processively in the 3'- to 5'-direction. In Streptomyces griseus subsp. griseus (strain JCM 4626 / CBS 651.72 / NBRC 13350 / KCC S-0626 / ISP 5235), this protein is Polyribonucleotide nucleotidyltransferase.